Consider the following 280-residue polypeptide: DegV domain-containing protein CA_C1624 (280 aa).

The DegV domain occupies Ile-4 to Lys-279. 2 residues coordinate hexadecanoate: Thr-60 and Ser-93.

In terms of biological role, may bind long-chain fatty acids, such as palmitate, and may play a role in lipid transport or fatty acid metabolism. This chain is DegV domain-containing protein CA_C1624, found in Clostridium acetobutylicum (strain ATCC 824 / DSM 792 / JCM 1419 / IAM 19013 / LMG 5710 / NBRC 13948 / NRRL B-527 / VKM B-1787 / 2291 / W).